Reading from the N-terminus, the 1600-residue chain is Eukaryotic translation initiation factor 4 gamma 1 (1600 aa).

The disordered stretch occupies residues 1-88 (MNKAPQPTGP…ARPGPAPHVY (88 aa)). Over residues 7–24 (PTGPPPARSPGLPQPAFP) the composition is skewed to pro residues. Residue Ser-15 is modified to Phosphoserine. Residues 34-48 (STPQATQMNTPSQPR) are compositionally biased toward polar residues. Residues 60–79 (PSRAQPPSSAASRVQSAAPA) show a composition bias toward low complexity. Residues Arg-80 and Arg-117 each carry the omega-N-methylarginine modification. 5 disordered regions span residues 173–230 (NQPP…NGES), 243–326 (SQGA…LSPE), 366–501 (ETHE…QLSQ), 507–526 (AATQ…KELN), and 541–606 (VDPA…DQWK). The PABPC1-binding stretch occupies residues 179–207 (APKRERKTIRIRDPNQGGKDITEEIMSGA). Over residues 208–220 (RTASTPTPPQTGG) the composition is skewed to polar residues. Position 214 is a phosphothreonine (Thr-214). At Ser-230 the chain carries Phosphoserine. Positions 269-280 (SPSPTPSPPPIL) are enriched in pro residues. Position 324 is a phosphoserine (Ser-324). A compositionally biased stretch (low complexity) spans 438-449 (KVSSAALASILS). Residues 463–479 (QEEEMEEDDDDEEGGEA) are compositionally biased toward acidic residues. Polar residues predominate over residues 551–562 (QPPTGSNPSPES). Basic and acidic residues-rich tracts occupy residues 578-587 (WDSKEDKIHN) and 596-606 (QKYEYKSDQWK). The residue at position 606 (Lys-606) is an N6-acetyllysine. Residues 611–622 (EEKKRYDREFLL) form an EIF4E-binding region. Position 651 is a phosphothreonine (Thr-651). Disordered regions lie at residues 667–719 (GPDF…TRKI) and 734–760 (AEKA…DGSK). The interval 686-1089 (GPPRGGPGGE…GSIDSNNQLF (404 aa)) is eIF3/EIF4A-binding. 2 positions are modified to omega-N-methylarginine: Arg-689 and Arg-698. Residues 697 to 707 (PRGPAGLGPRR) are compositionally biased toward low complexity. Residues 745-760 (TAADKDRGEEDADGSK) are compositionally biased toward basic and acidic residues. The region spanning 765-993 (FRRVRSILNK…QDVLDLRQSN (229 aa)) is the MIF4G domain. Disordered regions lie at residues 1029–1117 (AKGS…SEAT) and 1129–1238 (QQTL…AALS). Position 1032 is a phosphoserine (Ser-1032). Arg-1036 and Arg-1046 each carry omega-N-methylarginine. A phosphoserine mark is found at Ser-1081 and Ser-1096. Lys-1099 is modified (N6-acetyllysine). Ser-1147 and Ser-1149 each carry phosphoserine. Residues 1148–1180 (LSRERGEKAGDRGDRLERSERGGDRGDRLDRAR) are compositionally biased toward basic and acidic residues. At Ser-1187 the chain carries Phosphoserine; by PKC/PRKCA. The segment covering 1188-1225 (FSKEVEERSRERPSQPEGLRKAASLTEDRGRDPVKREA) has biased composition (basic and acidic residues). A phosphoserine mark is found at Ser-1189, Ser-1196, and Ser-1211. Thr-1213 is modified (phosphothreonine). A phosphoserine mark is found at Ser-1231 and Ser-1238. Residues 1241–1363 (EVEKKSKAII…PMGELFREIT (123 aa)) form the MI domain. The region spanning 1429 to 1599 (ESEAPGQRTL…REAEDEESDH (171 aa)) is the W2 domain. Residues 1450–1600 (LLKDGGSNQR…EAEDEESDHN (151 aa)) form an EIF4A-binding region. The interval 1585 to 1600 (FFNWLREAEDEESDHN) is necessary but not sufficient for MKNK1-binding. At Ser-1597 the chain carries Phosphoserine.

This sequence belongs to the eukaryotic initiation factor 4G family. EIF4F is a multi-subunit complex, the composition of which varies with external and internal environmental conditions. It is composed of at least EIF4A, EIF4E (cap-binding) and EIF4G1/EIF4G3. Interacts with eIF3 complex, mutually exclusive with EIF4A1 or EIF4A2, EIF4E and through its N-terminus with PABPC1. Interacts with EIF4E or with EIF1 (mutually exclusive) through a common binding site. Interacts through its C-terminus with the serine/threonine kinases MKNK1, and with MKNK2. Appears to act as a scaffold protein, holding these enzymes in place to phosphorylate EIF4E. Non-phosphorylated EIF4EBP1 competes with EIF4G1/EIF4G3 to interact with EIF4E; insulin stimulated MAP-kinase (MAPK1 and MAPK3) phosphorylation of EIF4EBP1 causes dissociation of the complex allowing EIF4G1/EIF4G3 to bind and consequent initiation of translation. EIF4G1/EIF4G3 interacts with PABPC1 to bring about circularization of the mRNA. Interacts with EIF4E3. Interacts with CIRBP and MIF4GD. Interacts with RBM4. Interacts with HNRNPD/AUF1; the interaction requires RNA. Interacts with DDX3X; the interaction requires RNA. Interacts with DAZAP2. As to quaternary structure, (Microbial infection) Interacts with murine norovirus viral genome-linked protein (via C-terminus); this interaction plays a role in translation of viral proteins. Phosphorylated at multiple sites in vivo. Phosphorylation at Ser-1187 by PRKCA induces binding to MKNK1.

The protein localises to the cytoplasm. Its subcellular location is the nucleus. The protein resides in the stress granule. In terms of biological role, component of the protein complex eIF4F, which is involved in the recognition of the mRNA cap, ATP-dependent unwinding of 5'-terminal secondary structure and recruitment of mRNA to the ribosome. Exists in two complexes, either with EIF1 or with EIF4E (mutually exclusive). Together with EIF1, is required for leaky scanning, in particular for avoiding cap-proximal start codon. Together with EIF4E, antagonizes the scanning promoted by EIF1-EIF4G1 and locates the start codon (through a TISU element) without scanning. As a member of the eIF4F complex, required for endoplasmic reticulum stress-induced ATF4 mRNA translation. This chain is Eukaryotic translation initiation factor 4 gamma 1 (Eif4g1), found in Mus musculus (Mouse).